The chain runs to 241 residues: Probable transcriptional regulatory protein lin1570 (241 aa).

Residues 1–14 are compositionally biased toward polar residues; it reads MAGHSKWNNIQGRK. Residues 1 to 22 are disordered; sequence MAGHSKWNNIQGRKNAQDSKRS.

Belongs to the TACO1 family.

The protein localises to the cytoplasm. The polypeptide is Probable transcriptional regulatory protein lin1570 (Listeria innocua serovar 6a (strain ATCC BAA-680 / CLIP 11262)).